The sequence spans 267 residues: Tryptophan synthase alpha chain (267 aa).

Catalysis depends on proton acceptor residues E43 and D54.

This sequence belongs to the TrpA family. In terms of assembly, tetramer of two alpha and two beta chains.

The enzyme catalyses (1S,2R)-1-C-(indol-3-yl)glycerol 3-phosphate + L-serine = D-glyceraldehyde 3-phosphate + L-tryptophan + H2O. Its pathway is amino-acid biosynthesis; L-tryptophan biosynthesis; L-tryptophan from chorismate: step 5/5. The alpha subunit is responsible for the aldol cleavage of indoleglycerol phosphate to indole and glyceraldehyde 3-phosphate. The sequence is that of Tryptophan synthase alpha chain from Bacillus pumilus (strain SAFR-032).